A 497-amino-acid polypeptide reads, in one-letter code: Succinate-semialdehyde dehydrogenase [NADP(+)] (497 aa).

The active-site Proton acceptor is glutamate 264. The active-site Nucleophile is cysteine 298.

Belongs to the aldehyde dehydrogenase family. In terms of assembly, homotetramer.

The protein resides in the cytoplasm. The enzyme catalyses succinate semialdehyde + NAD(+) + H2O = succinate + NADH + 2 H(+). It carries out the reaction succinate semialdehyde + NADP(+) + H2O = succinate + NADPH + 2 H(+). It participates in amino-acid degradation; 4-aminobutanoate degradation. With respect to regulation, inhibited by AMP, ADP anf ATP. Functionally, catalyzes the oxidation of succinate semialdehyde to succinate. Can utilize both NAD(+) or NADP(+) as a coenzyme, but has a 2.5-fold lower activity with NADP(+) than with NAD(+). Functions in a gamma-aminobutyrate (GABA) degradation pathway that allows growth utilizing GABA as a nitrogen source. Functions in the GABA shunt, which allows to bypass 2 reactions in the TCA cycle by removing alpha-ketoglutarate from the cycle and feeding succinate and NADH back into the cycle. In Saccharomyces cerevisiae (strain ATCC 204508 / S288c) (Baker's yeast), this protein is Succinate-semialdehyde dehydrogenase [NADP(+)].